The primary structure comprises 126 residues: Profilin-3 (126 aa).

The protein belongs to the profilin family. As to quaternary structure, occurs in many kinds of cells as a complex with monomeric actin in a 1:1 ratio.

The protein resides in the cytoplasm. The protein localises to the cytoskeleton. In terms of biological role, binds to actin and affects the structure of the cytoskeleton. At high concentrations, profilin prevents the polymerization of actin, whereas it enhances it at low concentrations. By binding to PIP2, it inhibits the formation of IP3 and DG. The polypeptide is Profilin-3 (proC) (Dictyostelium discoideum (Social amoeba)).